A 250-amino-acid polypeptide reads, in one-letter code: Uracil-DNA glycosylase (250 aa).

The Proton acceptor role is filled by Asp78. The disordered stretch occupies residues 228–250; the sequence is RGQKPVDWSGEQNNASRQGKFAL.

This sequence belongs to the uracil-DNA glycosylase (UDG) superfamily. UNG family.

Its subcellular location is the cytoplasm. The enzyme catalyses Hydrolyzes single-stranded DNA or mismatched double-stranded DNA and polynucleotides, releasing free uracil.. Functionally, excises uracil residues from the DNA which can arise as a result of misincorporation of dUMP residues by DNA polymerase or due to deamination of cytosine. This Bordetella bronchiseptica (strain ATCC BAA-588 / NCTC 13252 / RB50) (Alcaligenes bronchisepticus) protein is Uracil-DNA glycosylase.